The chain runs to 652 residues: MAFSAAASASTNLVPAVASGRGGAAASASQHGETARLARFGVSSSACANALSLSSSRSCASMGEVLWANGGAVRLAARRTLRVRAAGAGTIVQPEGFQITSVPTTPIDGQKTGTSGLRKKVKEFQSPNYLANWIQALFDSLPAEDVKGSTLVLGGDGRYFNKEASQIIIKIAAGNGVGKILVGREGIASTPAVSAIIRARKANGGFVMSASHNPGGPKYDWGIKFNYSSGQPAPESITDKIYGNTLSIKEIKQADIPDVNLSELGVHKFGDFSVEVIDPVADYLNLLEEVFDFDLLKGLLTSKDFRFKFDAMHAVTGAYAKPIFVDRLGAPEDSIFNGVPLEDFGGGHPDPNLTYAEELVKIMYGTDAPDFGAASDGDGDRNMILGNHFFITPSDSVAMIAANADAIPYFKTGLKGLARSMPTSGALDRVAKELGLPFFETPTGWKFFGNLMDAGKCSVCGEESFGTGSDHVREKDGIWAVLAWISIVAYKNRDRKVGEKLVTVADIAKEHWAKYGRNFFSRYDYEECESAGANKMVEHLRDIIAKSKKGDKYGNYELELADDFAYTDPIDGSVATKQGIRFIFSDGSRIIFRLSGTGSAGATIRIYVEQYEQDTTKHDLDAQDALKPLIDIALSVSKLQEFTGRTKPTVIT.

The N-terminal 84 residues, 1 to 84 (MAFSAAASAS…LAARRTLRVR (84 aa)), are a transit peptide targeting the chloroplast. Alpha-D-glucose 1,6-bisphosphate-binding residues include R118 and S211. The active-site Phosphoserine intermediate is the S211. Mg(2+) is bound by residues S211, D376, D378, and D380. S211 is subject to Phosphoserine. Alpha-D-glucose 1,6-bisphosphate contacts are provided by D380, R381, T443, E462, S464, and K475.

The protein belongs to the phosphohexose mutase family. The cofactor is Mg(2+).

It is found in the plastid. The protein localises to the chloroplast. The enzyme catalyses alpha-D-glucose 1-phosphate = alpha-D-glucose 6-phosphate. It carries out the reaction O-phospho-L-seryl-[protein] + alpha-D-glucose 1-phosphate = alpha-D-glucose 1,6-bisphosphate + L-seryl-[protein]. It catalyses the reaction alpha-D-glucose 1,6-bisphosphate + L-seryl-[protein] = O-phospho-L-seryl-[protein] + alpha-D-glucose 6-phosphate. With respect to regulation, inhibited by the Calvin cycle intermediates fructose-1,6-bisphosphate and ribulose-1,5-bisphosphate. Functionally, catalyzes the reversible isomerization of alpha-D-glucose 1-phosphate to alpha-D-glucose 6-phosphate. The mechanism proceeds via the intermediate compound alpha-D-glucose 1,6-bisphosphate. This enzyme participates in both the breakdown and synthesis of glucose. Required for sucrose production and accumulation necessary during plant development. Promotes gravitropic responses, negative in shoots but positive in roots, by facilitating starch granules (statoliths) formation. This is Phosphoglucomutase 1, chloroplastic from Marchantia polymorpha (Common liverwort).